We begin with the raw amino-acid sequence, 130 residues long: Small ribosomal subunit protein uS9 (130 aa).

The segment at 109-130 (RVKERKKYGQKGARAKFQFSKR) is disordered.

It belongs to the universal ribosomal protein uS9 family.

The sequence is that of Small ribosomal subunit protein uS9 from Desulfotalea psychrophila (strain LSv54 / DSM 12343).